Reading from the N-terminus, the 335-residue chain is Methionine aminopeptidase 1D, mitochondrial (335 aa).

A mitochondrion-targeting transit peptide spans 1 to 19 (MAAPSGVHLLVRRGSHRIF). His-161 lines the substrate pocket. Residues Asp-178, Asp-189, and His-252 each contribute to the a divalent metal cation site. Position 259 (His-259) interacts with substrate. A divalent metal cation-binding residues include Glu-284 and Glu-315.

This sequence belongs to the peptidase M24A family. Methionine aminopeptidase type 1 subfamily. Co(2+) is required as a cofactor. Requires Zn(2+) as cofactor. Mn(2+) serves as cofactor. It depends on Fe(2+) as a cofactor. In terms of tissue distribution, overexpressed in colon cancer cell lines and colon tumors as compared to normal tissues (at protein level).

It is found in the mitochondrion. It catalyses the reaction Release of N-terminal amino acids, preferentially methionine, from peptides and arylamides.. In terms of biological role, removes the N-terminal methionine from nascent proteins. The N-terminal methionine is often cleaved when the second residue in the primary sequence is small and uncharged (Met-Ala-, Cys, Gly, Pro, Ser, Thr, or Val). Requires deformylation of the N(alpha)-formylated initiator methionine before it can be hydrolyzed. May play a role in colon tumorigenesis. This Homo sapiens (Human) protein is Methionine aminopeptidase 1D, mitochondrial (METAP1D).